The following is an 83-amino-acid chain: Small ribosomal subunit protein bS16 (83 aa).

It belongs to the bacterial ribosomal protein bS16 family.

This is Small ribosomal subunit protein bS16 from Verminephrobacter eiseniae (strain EF01-2).